The primary structure comprises 319 residues: uncharacterized protein (319 aa).

The next 9 membrane-spanning stretches (helical) occupy residues 11-31, 43-63, 83-103, 108-128, 134-154, 195-215, 220-240, 260-280, and 284-304; these read GLWA…LGVF, ALGW…GVWW, LSVD…IPAL, VLFW…FAGV, FHWL…KLFL, LATP…LFAL, AIFA…FAIL, KVGL…IDFV, and PEVS…ASLI.

It belongs to the TerC family.

The protein resides in the cell membrane. This is an uncharacterized protein from Myxococcus xanthus.